The following is a 129-amino-acid chain: Small ribosomal subunit protein uS11 (129 aa).

Belongs to the universal ribosomal protein uS11 family. Part of the 30S ribosomal subunit. Interacts with proteins S7 and S18. Binds to IF-3.

In terms of biological role, located on the platform of the 30S subunit, it bridges several disparate RNA helices of the 16S rRNA. Forms part of the Shine-Dalgarno cleft in the 70S ribosome. This is Small ribosomal subunit protein uS11 from Caulobacter vibrioides (strain ATCC 19089 / CIP 103742 / CB 15) (Caulobacter crescentus).